Here is a 320-residue protein sequence, read N- to C-terminus: rRNA 2'-O-methyltransferase fibrillarin 2 (320 aa).

The interval 1–79 is disordered; the sequence is MRPPLTGSGG…GRGGMKGGSK (79 aa). Gly residues-rich tracts occupy residues 7-44 and 57-76; these read GSGG…GGRG and PPRG…GMKG. S-adenosyl-L-methionine is bound by residues 167–168, 186–187, 211–212, and 231–234; these read TT, EF, DA, and DVAQ.

It belongs to the methyltransferase superfamily. Fibrillarin family. Component of box C/D small nucleolar ribonucleoprotein (snoRNP) particles. Interacts with groundnut rosette virus long-distance movement protein; this interaction is required for virus long-distance movement protein transiting through host Cajal body and nucleolus, relocalization of fibrillarin to the cytoplasm, and in presence of viral RNA, leads to the formation of stable RNPs. Interacts (via GAR domain) with the hordeivirus TGB1 movement protein (via the first 82 amino acid residues). Interacts with PRMT11 and PRMT12. Interacts with MED19A. Methylated by PRMT11 and PRMT12. As to expression, expressed in roots and flowers. Expressed in leaves and stems. Expression levels decrease during aging.

It is found in the nucleus. The protein localises to the nucleolus. The enzyme catalyses a ribonucleotide in rRNA + S-adenosyl-L-methionine = a 2'-O-methylribonucleotide in rRNA + S-adenosyl-L-homocysteine + H(+). The catalysed reaction is L-glutaminyl-[histone H2A] + S-adenosyl-L-methionine = N(5)-methyl-L-glutaminyl-[histone H2A] + S-adenosyl-L-homocysteine + H(+). S-adenosyl-L-methionine-dependent methyltransferase that has the ability to methylate both RNAs and proteins. Involved in pre-rRNA processing. Utilizes the methyl donor S-adenosyl-L-methionine to catalyze the site-specific 2'-hydroxyl methylation of ribose moieties in pre-ribosomal RNA. Site specificity is provided by a guide RNA that base pairs with the substrate. Methylation occurs at a characteristic distance from the sequence involved in base pairing with the guide RNA. Also acts as a protein methyltransferase by mediating methylation of 'Gln-105' of histone H2A (H2AQ105me), a modification that impairs binding of the FACT complex and is specifically present at 35S ribosomal DNA locus. Acts as a negative regulator of expression of immune responsive genes, including pathogenesis-related gene 1 (PR1), and of resistance against bacterial pathogen. Binds to MED19A, a positive regulator of PR1 expression, to repress the activator activity of MED19A. In response to the bacterial pathogen-associated molecular pattern (PAMP) elf18, associates with the long non-coding RNA (lncRNA) ELENA1 (At4g16355), and releases its repression of MED19A. Possesses ribonuclease activity toward rRNA in vitro. Binds phosphoinositides, phospholipids and phosphatidic acid in vitro. In Arabidopsis thaliana (Mouse-ear cress), this protein is rRNA 2'-O-methyltransferase fibrillarin 2.